A 346-amino-acid polypeptide reads, in one-letter code: Beta-ketoacyl-[acyl-carrier-protein] synthase III (346 aa).

Active-site residues include C120 and H256. The segment at 257–261 is ACP-binding; the sequence is QANIR. The active site involves N286.

It belongs to the thiolase-like superfamily. FabH family. Homodimer.

The protein resides in the cytoplasm. It catalyses the reaction malonyl-[ACP] + acetyl-CoA + H(+) = 3-oxobutanoyl-[ACP] + CO2 + CoA. It functions in the pathway lipid metabolism; fatty acid biosynthesis. Its function is as follows. Catalyzes the condensation reaction of fatty acid synthesis by the addition to an acyl acceptor of two carbons from malonyl-ACP. Catalyzes the first condensation reaction which initiates fatty acid synthesis and may therefore play a role in governing the total rate of fatty acid production. Possesses both acetoacetyl-ACP synthase and acetyl transacylase activities. Its substrate specificity determines the biosynthesis of branched-chain and/or straight-chain of fatty acids. The polypeptide is Beta-ketoacyl-[acyl-carrier-protein] synthase III (Deinococcus geothermalis (strain DSM 11300 / CIP 105573 / AG-3a)).